The chain runs to 186 residues: uncharacterized protein (186 aa).

The N-terminal stretch at 1–21 (MKFFLGSALFLILTFINLVRA) is a signal peptide. Topologically, residues 22–142 (EFEFITPAED…AFSVNPIDKK (121 aa)) are extracellular. N-linked (GlcNAc...) asparagine glycosylation is found at Asn62, Asn75, Asn93, and Asn104. Residues 143 to 163 (LAIGLSVGLSCCILIVLFLHF) form a helical membrane-spanning segment. Residues 164 to 186 (ATRRERRILKNEKELEMSSYRKH) are Cytoplasmic-facing.

The protein resides in the membrane. This is an uncharacterized protein from Schizosaccharomyces pombe (strain 972 / ATCC 24843) (Fission yeast).